The primary structure comprises 309 residues: Succinate dehydrogenase [ubiquinone] iron-sulfur subunit 3, mitochondrial (309 aa).

A mitochondrion-targeting transit peptide spans 1–22 (MSSVLRLLGRRICNPAAEKVRL). The region spanning 69–160 (FKIYRWNPDK…PTIITPLPHM (92 aa)) is the 2Fe-2S ferredoxin-type domain. [2Fe-2S] cluster is bound by residues Cys120, Cys125, and Cys140. The 4Fe-4S ferredoxin-type domain occupies 202–232 (DRKKLDGLYECILCACCTTSCPSYWWNPEEF). Residues Cys212, Cys215, and Cys218 each contribute to the [4Fe-4S] cluster site. Cys222 contributes to the [3Fe-4S] cluster binding site. Residue Trp227 coordinates a ubiquinone. [3Fe-4S] cluster is bound by residues Cys270 and Cys276. Cys280 lines the [4Fe-4S] cluster pocket.

It belongs to the succinate dehydrogenase/fumarate reductase iron-sulfur protein family. As to quaternary structure, component of complex II composed of eight subunits in plants: four classical SDH subunits SDH1, SDH2, SDH3 and SDH4 (a flavoprotein (FP), an iron-sulfur protein (IP), and a cytochrome b composed of a large and a small subunit.), as well as four subunits unknown in mitochondria from bacteria and heterotrophic eukaryotes. [2Fe-2S] cluster is required as a cofactor. [3Fe-4S] cluster serves as cofactor. The cofactor is [4Fe-4S] cluster.

Its subcellular location is the mitochondrion inner membrane. The catalysed reaction is a quinone + succinate = fumarate + a quinol. Its pathway is carbohydrate metabolism; tricarboxylic acid cycle; fumarate from succinate (eukaryal route): step 1/1. Iron-sulfur protein (IP) subunit of succinate dehydrogenase (SDH) that is involved in complex II of the mitochondrial electron transport chain and is responsible for transferring electrons from succinate to ubiquinone (coenzyme Q). The protein is Succinate dehydrogenase [ubiquinone] iron-sulfur subunit 3, mitochondrial (SDH2-3) of Arabidopsis thaliana (Mouse-ear cress).